Consider the following 201-residue polypeptide: Small ribosomal subunit protein uS4c (201 aa).

Positions 20–44 (GLTSKRPTVGSELRNQSRSTKKSQY) are disordered. Residues 89–150 (MRLDNILFRL…NKKSKTLIQN (62 aa)) form the S4 RNA-binding domain.

Belongs to the universal ribosomal protein uS4 family. In terms of assembly, part of the 30S ribosomal subunit. Contacts protein S5. The interaction surface between S4 and S5 is involved in control of translational fidelity.

It is found in the plastid. The protein localises to the chloroplast. In terms of biological role, one of the primary rRNA binding proteins, it binds directly to 16S rRNA where it nucleates assembly of the body of the 30S subunit. Functionally, with S5 and S12 plays an important role in translational accuracy. In Lotus japonicus (Lotus corniculatus var. japonicus), this protein is Small ribosomal subunit protein uS4c (rps4).